Consider the following 30-residue polypeptide: Trypsin inhibitor 4 (30 aa).

Disulfide bonds link Cys-3–Cys-20, Cys-10–Cys-22, and Cys-16–Cys-29.

It belongs to the protease inhibitor I7 (squash-type serine protease inhibitor) family.

The protein localises to the secreted. Functionally, inhibits trypsin. This Cucumis sativus (Cucumber) protein is Trypsin inhibitor 4.